Consider the following 332-residue polypeptide: DNA-directed RNA polymerase subunit alpha (332 aa).

The tract at residues 1 to 234 (MTVTANQVLR…DQLSVFGDFT (234 aa)) is alpha N-terminal domain (alpha-NTD). The segment at 248–332 (VDPVLLRPID…AGVASHGMLG (85 aa)) is alpha C-terminal domain (alpha-CTD).

This sequence belongs to the RNA polymerase alpha chain family. In terms of assembly, homodimer. The RNAP catalytic core consists of 2 alpha, 1 beta, 1 beta' and 1 omega subunit. When a sigma factor is associated with the core the holoenzyme is formed, which can initiate transcription.

It catalyses the reaction RNA(n) + a ribonucleoside 5'-triphosphate = RNA(n+1) + diphosphate. DNA-dependent RNA polymerase catalyzes the transcription of DNA into RNA using the four ribonucleoside triphosphates as substrates. This chain is DNA-directed RNA polymerase subunit alpha, found in Stenotrophomonas maltophilia (strain R551-3).